Consider the following 82-residue polypeptide: UPF0213 protein MW0443 (82 aa).

One can recognise a GIY-YIG domain in the interval 2–77; that stretch reads DSHFVYIVKC…KTYTRQKKLR (76 aa).

It belongs to the UPF0213 family.

The chain is UPF0213 protein MW0443 from Staphylococcus aureus (strain MW2).